The primary structure comprises 92 residues: ATP synthase subunit c (92 aa).

Transmembrane regions (helical) follow at residues 20–40 (GAGLVAVGAGLASIGNFGTGL) and 71–91 (MAISESASLYSFIIAILLVFV).

This sequence belongs to the ATPase C chain family. F-type ATPases have 2 components, F(1) - the catalytic core - and F(0) - the membrane proton channel. F(1) has five subunits: alpha(3), beta(3), gamma(1), delta(1), epsilon(1). F(0) has three main subunits: a(1), b(2) and c(10-14). The alpha and beta chains form an alternating ring which encloses part of the gamma chain. F(1) is attached to F(0) by a central stalk formed by the gamma and epsilon chains, while a peripheral stalk is formed by the delta and b chains.

It is found in the cell membrane. Its function is as follows. F(1)F(0) ATP synthase produces ATP from ADP in the presence of a proton or sodium gradient. F-type ATPases consist of two structural domains, F(1) containing the extramembraneous catalytic core and F(0) containing the membrane proton channel, linked together by a central stalk and a peripheral stalk. During catalysis, ATP synthesis in the catalytic domain of F(1) is coupled via a rotary mechanism of the central stalk subunits to proton translocation. Key component of the F(0) channel; it plays a direct role in translocation across the membrane. A homomeric c-ring of between 10-14 subunits forms the central stalk rotor element with the F(1) delta and epsilon subunits. The polypeptide is ATP synthase subunit c (Mycoplasmopsis pulmonis (strain UAB CTIP) (Mycoplasma pulmonis)).